We begin with the raw amino-acid sequence, 734 residues long: Photosystem I P700 chlorophyll a apoprotein A2 (734 aa).

The next 8 membrane-spanning stretches (helical) occupy residues 46-69 (IFAS…FHVA), 135-158 (LYTG…LHLQ), 175-199 (LNHH…HVAI), 273-291 (IAHH…GHMY), 330-353 (LHFQ…QHMY), 369-395 (AALY…IFFI), 417-439 (AIIS…LYVH), and 517-535 (FLVH…LILV). 2 residues coordinate [4Fe-4S] cluster: Cys-559 and Cys-568. A run of 2 helical transmembrane segments spans residues 575-596 (AFYL…YWHW) and 643-665 (LSVW…MFLI). Chlorophyll a-binding residues include His-654, Met-662, and Tyr-670. Trp-671 is a phylloquinone binding site. A helical transmembrane segment spans residues 707–727 (LVGLAHFSVGYIFTYAAFLIA).

The protein belongs to the PsaA/PsaB family. As to quaternary structure, the PsaA/B heterodimer binds the P700 chlorophyll special pair and subsequent electron acceptors. PSI consists of a core antenna complex that captures photons, and an electron transfer chain that converts photonic excitation into a charge separation. The eukaryotic PSI reaction center is composed of at least 11 subunits. The cofactor is P700 is a chlorophyll a/chlorophyll a' dimer, A0 is one or more chlorophyll a, A1 is one or both phylloquinones and FX is a shared 4Fe-4S iron-sulfur center..

Its subcellular location is the plastid. It localises to the chloroplast thylakoid membrane. It carries out the reaction reduced [plastocyanin] + hnu + oxidized [2Fe-2S]-[ferredoxin] = oxidized [plastocyanin] + reduced [2Fe-2S]-[ferredoxin]. PsaA and PsaB bind P700, the primary electron donor of photosystem I (PSI), as well as the electron acceptors A0, A1 and FX. PSI is a plastocyanin-ferredoxin oxidoreductase, converting photonic excitation into a charge separation, which transfers an electron from the donor P700 chlorophyll pair to the spectroscopically characterized acceptors A0, A1, FX, FA and FB in turn. Oxidized P700 is reduced on the lumenal side of the thylakoid membrane by plastocyanin. This is Photosystem I P700 chlorophyll a apoprotein A2 from Citrus sinensis (Sweet orange).